A 217-amino-acid polypeptide reads, in one-letter code: Peptide methionine sulfoxide reductase MsrA (217 aa).

Residue C54 is part of the active site.

It belongs to the MsrA Met sulfoxide reductase family.

It catalyses the reaction L-methionyl-[protein] + [thioredoxin]-disulfide + H2O = L-methionyl-(S)-S-oxide-[protein] + [thioredoxin]-dithiol. It carries out the reaction [thioredoxin]-disulfide + L-methionine + H2O = L-methionine (S)-S-oxide + [thioredoxin]-dithiol. In terms of biological role, has an important function as a repair enzyme for proteins that have been inactivated by oxidation. Catalyzes the reversible oxidation-reduction of methionine sulfoxide in proteins to methionine. The protein is Peptide methionine sulfoxide reductase MsrA of Maricaulis maris (strain MCS10) (Caulobacter maris).